The primary structure comprises 391 residues: Cold-shock protein CS120 (391 aa).

A run of 17 repeats spans residues 9 to 31 (GEKK…DHKE), 49 to 62 (TGGA…AGTT), 72 to 94 (GEKK…DHQQ), 95 to 108 (TGGT…TGTA), 115 to 128 (TGGT…TGTA), 135 to 148 (TGGT…TGVT), 156 to 178 (GEKK…DHQQ), 179 to 192 (TGGT…TGTA), 199 to 212 (GGGT…TGMT), 220 to 242 (GEKK…DHQQ), 243 to 256 (TGGT…TGTA), 263 to 276 (GGGT…TGMT), 284 to 306 (GEKK…DHQQ), 307 to 320 (TGGA…TGTA), 327 to 340 (GGGT…AGVI), 350 to 363 (TGGT…TGTT), and 374 to 391 (GEKK…PGQH). Residues 9-391 (GEKKGIMEKI…KIKDKLPGQH (383 aa)) form a 6 X 23 AA approximate repeats region. A compositionally biased stretch (basic and acidic residues) spans 21–33 (KLPGGHGDHKETA). The interval 21-391 (KLPGGHGDHK…KIKDKLPGQH (371 aa)) is disordered. Positions 34-59 (GTHGHPGTATHGAPATGGAYGQQGHA) are enriched in low complexity. Residues 49 to 363 (TGGAYGQQGH…HGQHGHTGTT (315 aa)) are 11 X 14 AA approximate repeats. A compositionally biased stretch (basic and acidic residues) spans 70–92 (HAGEKKGVMENIKDKLPGGHQDH). Positions 93-145 (QQTGGTYGQQGHTGTATHGTPATGGTYGQQGHTGTATHGTPATGGTYGEQGHT) are enriched in low complexity. Positions 155-176 (TGEKKGVMENIKEKLPGGHGDH) are enriched in basic and acidic residues. Positions 177 to 196 (QQTGGTYGQQGHTGTATHGT) are enriched in low complexity. A compositionally biased stretch (basic and acidic residues) spans 219–240 (TGEKKGVMENIKDKLPGGHGDH). Composition is skewed to low complexity over residues 241 to 260 (QQTG…TQGT) and 272 to 282 (HTGMTGAGTHS). Basic and acidic residues predominate over residues 283-304 (TGEKKGVMENIKEKLPGGHSDH). Low complexity-rich tracts occupy residues 305–324 (QQTG…THGT) and 333–351 (QHGH…TATG). A compositionally biased stretch (gly residues) spans 361-372 (GTTGTGTHGSDG). The segment covering 373 to 391 (IGEKKSLMDKIKDKLPGQH) has biased composition (basic and acidic residues).

The protein belongs to the plant dehydrin family.

Functionally, may reduce intracellular freezing damage during winter by hydrogen-bonding to the lattice of the nascent ice crystals, thus modifying the structure and/or propagation of ice crystals. The chain is Cold-shock protein CS120 (CS120) from Triticum aestivum (Wheat).